A 181-amino-acid polypeptide reads, in one-letter code: Large ribosomal subunit protein uL5 (181 aa).

It belongs to the universal ribosomal protein uL5 family. As to quaternary structure, part of the 50S ribosomal subunit; part of the 5S rRNA/L5/L18/L25 subcomplex. Contacts the 5S rRNA and the P site tRNA. Forms a bridge to the 30S subunit in the 70S ribosome.

Its function is as follows. This is one of the proteins that bind and probably mediate the attachment of the 5S RNA into the large ribosomal subunit, where it forms part of the central protuberance. In the 70S ribosome it contacts protein S13 of the 30S subunit (bridge B1b), connecting the 2 subunits; this bridge is implicated in subunit movement. Contacts the P site tRNA; the 5S rRNA and some of its associated proteins might help stabilize positioning of ribosome-bound tRNAs. This Picosynechococcus sp. (strain ATCC 27264 / PCC 7002 / PR-6) (Agmenellum quadruplicatum) protein is Large ribosomal subunit protein uL5.